The following is a 1447-amino-acid chain: Regulator of G-protein signaling 12 (1447 aa).

The segment at 1–21 is disordered; it reads MFRAGEASKRPLPGPSPPRVR. The 77-residue stretch at 22 to 98 folds into the PDZ domain; that stretch reads SVEVARGRAG…GVLHMVIAEG (77 aa). Residues Ser-172 and Ser-195 each carry the phosphoserine modification. Lys-196 participates in a covalent cross-link: Glycyl lysine isopeptide (Lys-Gly) (interchain with G-Cter in SUMO2). One can recognise a PID domain in the interval 228-340; sequence VAMIVGYLGS…GALRTSCHVF (113 aa). Disordered stretches follow at residues 410-429 and 443-482; these read ADAH…IGNF and LGGS…DPEG. Over residues 413–425 the composition is skewed to polar residues; sequence HQNNSTSSNSDSG. Residues 451-464 are compositionally biased toward gly residues; it reads GPGGSAWDGVGGRG. Omega-N-methylarginine occurs at positions 524 and 633. A disordered region spans residues 618–652; sequence NVRKTKEDKKGSKFGRGTGLTQPSQRTSARRSFGR. Ser-661 and Ser-671 each carry phosphoserine. The 118-residue stretch at 715 to 832 folds into the RGS domain; that stretch reads SFERLLQDPV…LKSPLYQECI (118 aa). The segment covering 843-853 has biased composition (polar residues); it reads DSQQVPSSPAS. Residues 843-941 form a disordered region; sequence DSQQVPSSPA…RESQGSVSSA (99 aa). Ser-850 and Ser-879 each carry phosphoserine. A compositionally biased stretch (basic and acidic residues) spans 914 to 923; the sequence is EHGDHADDAL. At Ser-943 the chain carries Phosphoserine. 2 RBD domains span residues 962-1032 and 1034-1104; these read KHCC…LEKR and LFRL…LEEK. Residues 1103-1117 are compositionally biased toward basic and acidic residues; the sequence is EKDPSRGKASADKQK. Residues 1103 to 1169 form a disordered region; it reads EKDPSRGKAS…RDPRLSKREE (67 aa). A compositionally biased stretch (polar residues) spans 1122–1136; that stretch reads KQNTAVNSSSRNHSA. Over residues 1151–1169 the composition is skewed to basic and acidic residues; it reads IKGENGKNARDPRLSKREE. Positions 1187 to 1209 constitute a GoLoco domain; sequence AEEFFELISKAQSNRADDQRGLL. A disordered region spans residues 1240 to 1447; it reads GFSKRSATGN…KTSAHHATFV (208 aa). The segment covering 1244 to 1258 has biased composition (polar residues); the sequence is RSATGNGRESASQPG. Low complexity-rich tracts occupy residues 1267–1280 and 1289–1298; these read SSDS…SASS and PPGQKSPSGP. Positions 1301-1313 are enriched in polar residues; that stretch reads TPQSPVSLAQEGT.

In terms of assembly, interacts with GNAI1. Interacts with GNAI2 and GNAI3; the interactions are GDP-dependent. In terms of tissue distribution, isoform 3 is brain specific.

The protein localises to the nucleus. It localises to the cytoplasm. Its subcellular location is the cell projection. The protein resides in the dendrite. It is found in the synapse. The protein localises to the nucleus matrix. In terms of biological role, regulates G protein-coupled receptor signaling cascades. Inhibits signal transduction by increasing the GTPase activity of G protein alpha subunits, thereby driving them into their inactive GDP-bound form. Functionally, behaves as a cell cycle-dependent transcriptional repressor, promoting inhibition of S-phase DNA synthesis. The protein is Regulator of G-protein signaling 12 (RGS12) of Homo sapiens (Human).